Consider the following 100-residue polypeptide: Small ribosomal subunit protein uS14c (100 aa).

This sequence belongs to the universal ribosomal protein uS14 family. Part of the 30S ribosomal subunit.

The protein resides in the plastid. Its subcellular location is the chloroplast. Functionally, binds 16S rRNA, required for the assembly of 30S particles. This is Small ribosomal subunit protein uS14c from Chlorokybus atmophyticus (Soil alga).